A 271-amino-acid polypeptide reads, in one-letter code: Imidazole glycerol phosphate synthase subunit HisF (271 aa).

Active-site residues include D12 and D131.

Belongs to the HisA/HisF family. Heterodimer of HisH and HisF.

Its subcellular location is the cytoplasm. The enzyme catalyses 5-[(5-phospho-1-deoxy-D-ribulos-1-ylimino)methylamino]-1-(5-phospho-beta-D-ribosyl)imidazole-4-carboxamide + L-glutamine = D-erythro-1-(imidazol-4-yl)glycerol 3-phosphate + 5-amino-1-(5-phospho-beta-D-ribosyl)imidazole-4-carboxamide + L-glutamate + H(+). The protein operates within amino-acid biosynthesis; L-histidine biosynthesis; L-histidine from 5-phospho-alpha-D-ribose 1-diphosphate: step 5/9. In terms of biological role, IGPS catalyzes the conversion of PRFAR and glutamine to IGP, AICAR and glutamate. The HisF subunit catalyzes the cyclization activity that produces IGP and AICAR from PRFAR using the ammonia provided by the HisH subunit. In Methanospirillum hungatei JF-1 (strain ATCC 27890 / DSM 864 / NBRC 100397 / JF-1), this protein is Imidazole glycerol phosphate synthase subunit HisF.